A 191-amino-acid chain; its full sequence is MAAERERGGRERSREREERDSEFVDKLVHINRVAKVVKGGKRFGFAALVVVGDQKGRVGFGHGKAREVPEAIRKATESAKRNLTRVALREGRTLHHDIAGRHGAGRVYLRAAPAGTGIIAGGPMRAVFETLGIADVVAKSVGSSNPYNMVRATFDALKHLDSPRSVAARRNIKVSTLQARRVGGDAEVVAE.

Positions methionine 1–serine 21 are disordered. Positions phenylalanine 23–valine 86 constitute an S5 DRBM domain.

In terms of assembly, part of the 30S ribosomal subunit. Contacts proteins S4 and S8.

With S4 and S12 plays an important role in translational accuracy. Functionally, located at the back of the 30S subunit body where it stabilizes the conformation of the head with respect to the body. The sequence is that of Small ribosomal subunit protein uS5 from Rhodopseudomonas palustris (strain ATCC BAA-98 / CGA009).